A 562-amino-acid polypeptide reads, in one-letter code: Formate--tetrahydrofolate ligase (562 aa).

71 to 78 contacts ATP; sequence TPAGEGKS.

Belongs to the formate--tetrahydrofolate ligase family.

The catalysed reaction is (6S)-5,6,7,8-tetrahydrofolate + formate + ATP = (6R)-10-formyltetrahydrofolate + ADP + phosphate. It participates in one-carbon metabolism; tetrahydrofolate interconversion. The polypeptide is Formate--tetrahydrofolate ligase (Bacillus cereus (strain Q1)).